The sequence spans 291 residues: tRNA U34 carboxymethyltransferase (291 aa).

Residues Lys-61, Trp-75, Lys-80, Gly-100, Asp-122–Ser-124, Val-149–Glu-150, Tyr-169, and Arg-284 contribute to the carboxy-S-adenosyl-L-methionine site.

Belongs to the class I-like SAM-binding methyltransferase superfamily. CmoB family. Homotetramer.

The enzyme catalyses carboxy-S-adenosyl-L-methionine + 5-hydroxyuridine(34) in tRNA = 5-carboxymethoxyuridine(34) in tRNA + S-adenosyl-L-homocysteine + H(+). Its function is as follows. Catalyzes carboxymethyl transfer from carboxy-S-adenosyl-L-methionine (Cx-SAM) to 5-hydroxyuridine (ho5U) to form 5-carboxymethoxyuridine (cmo5U) at position 34 in tRNAs. The protein is tRNA U34 carboxymethyltransferase of Campylobacter jejuni subsp. jejuni serotype O:23/36 (strain 81-176).